A 104-amino-acid polypeptide reads, in one-letter code: Probable quinol monooxygenase YgiN (104 aa).

Positions 2 to 100 (LTVIAEIRTR…DVLEMNIRIL (99 aa)) constitute an ABM domain.

In terms of assembly, homodimer.

It catalyses the reaction menadiol + 2 O2 = menadione + 2 superoxide + 2 H(+). In terms of biological role, can oxidize menadiol to menadione. This Escherichia coli O157:H7 protein is Probable quinol monooxygenase YgiN (ygiN).